A 263-amino-acid chain; its full sequence is MVSMRDLLECGVHFGHQTRRWNPKMKKFIFGERKGIYVIDLQKTLRYFRYTYNIVRDAAAEGKTILFVGTKKQAGGAIKEYAEKCGMPYVNHRWLGGMMTNFGTIRQSIRKLEVIEKMEEDGSIKLLTKKEALMLTRKKEKLLAYLGGIRYMKTQPDMIFVIDTVKEKIAVQEANRLRIPVVAPLDTNCDPDLVTYPIPGNDDAIRSVQLFCQEMAEAINEGKALREQDGEALVNEEKEITDEEKKEVLDEAMSEEDFGEEQE.

The segment covering 230 to 249 (GEALVNEEKEITDEEKKEVL) has biased composition (basic and acidic residues). The interval 230–263 (GEALVNEEKEITDEEKKEVLDEAMSEEDFGEEQE) is disordered. Residues 250-263 (DEAMSEEDFGEEQE) show a composition bias toward acidic residues.

The protein belongs to the universal ribosomal protein uS2 family.

This chain is Small ribosomal subunit protein uS2, found in Campylobacter jejuni subsp. jejuni serotype O:2 (strain ATCC 700819 / NCTC 11168).